Reading from the N-terminus, the 284-residue chain is Prolyl 4-hydroxylase subunit alpha (284 aa).

The region spanning 169–284 (NFNSIKTQTQ…PRIAITTWIY (116 aa)) is the Fe2OG dioxygenase domain. Fe cation is bound by residues histidine 191, aspartate 193, and histidine 266. Arginine 276 contacts 2-oxoglutarate.

Belongs to the P4HA family. As to quaternary structure, heterotetramer of two alpha-1 chains and two beta chains (the beta chain is the multi-functional PDI). Requires Fe(2+) as cofactor. L-ascorbate serves as cofactor.

It is found in the cytoplasm. The catalysed reaction is L-prolyl-[Skp1 protein] + 2-oxoglutarate + O2 = trans-4-hydroxy-L-prolyl-[Skp1 protein] + succinate + CO2. Its activity is regulated as follows. Inhibited by the prolyl-hydroxylase inhibitors alpha,alpha'-dipyridyl and ethyl 3,4-dihydroxybenzoate. Functionally, catalyzes the post-translational formation of 4-hydroxyproline. Probably hydroxylates skp1 on Pro-143. The protein is Prolyl 4-hydroxylase subunit alpha (phyA) of Dictyostelium discoideum (Social amoeba).